The sequence spans 178 residues: MADGKAGEEKPEKPQRAGAAGGPEEEAEKPVKTKTVSSSNGGENSSRSAEKRSAEDETADLPTKPTKISKFGFAIGSQTTKKASAISIKLGSSKPKEPVPTLAPKTLSVAAAFNEDEDSEPEEMPPEAKMRMKNIGRDTPTSAGPNSFNKGKHGFSDNQKLWERNIKSHLGNVHDQDN.

Basic and acidic residues predominate over residues 1-15 (MADGKAGEEKPEKPQ). The interval 1–84 (MADGKAGEEK…IGSQTTKKAS (84 aa)) is disordered. Position 2 is an N-acetylalanine (Ala-2). Residues 37–47 (SSSNGGENSSR) show a composition bias toward low complexity. Position 53 is a phosphoserine (Ser-53). An N6-acetyllysine modification is found at Lys-64. Phosphoserine occurs at positions 77, 87, and 119. Residues 134-178 (NIGRDTPTSAGPNSFNKGKHGFSDNQKLWERNIKSHLGNVHDQDN) form a disordered region. Phosphothreonine is present on Thr-139. The span at 139 to 149 (TPTSAGPNSFN) shows a compositional bias: polar residues. Ser-147 carries the phosphoserine modification. Lys-150 and Lys-152 each carry N6-acetyllysine. The span at 160 to 178 (KLWERNIKSHLGNVHDQDN) shows a compositional bias: basic and acidic residues.

In terms of assembly, interacts with UHRF2/NIRF. Ubiquitinated; mediated by UHRF2 and leading to its subsequent proteasomal degradation. In terms of processing, N-terminally acetylated in a HYPK-dependent manner by the NatA acetyltransferase complex which is composed of NAA10 and NAA15.

It is found in the nucleus. Its function is as follows. May be involved in cell cycle regulation. In Bos taurus (Bovine), this protein is PEST proteolytic signal-containing nuclear protein (PCNP).